A 755-amino-acid polypeptide reads, in one-letter code: Histone-lysine N-methyltransferase, H3 lysine-9 specific SUVH8 (755 aa).

Disordered regions lie at residues 62–98 (YDRD…PPQT) and 111–243 (YDRD…KMVI). 2 stretches are compositionally biased toward basic and acidic residues: residues 73–86 (VHRE…EEAH) and 122–135 (IDRE…EDAH). The segment at residues 174–186 (KRGRGRPKGSKNG) is a DNA-binding region (a.T hook). Over residues 174–193 (KRGRGRPKGSKNGSRKPKKP) the composition is skewed to basic residues. A compositionally biased stretch (polar residues) spans 197–207 (DNNSTDASAGP). Residues 212 to 231 (GKRRCGRPKGLKNRSRKPKK) are compositionally biased toward basic residues. In terms of domain architecture, YDG spans 310 to 448 (GPIPGVQVGD…FKEYRFKLLR (139 aa)). A Pre-SET domain is found at 528–578 (QSLVQSYIHQNCTCILKNCGQLPYHDNILVCRKPLIYECGGSCPTRMVETG). Positions 581-723 (LHLEVFKTSN…PMTELTYDYG (143 aa)) constitute an SET domain. S-adenosyl-L-methionine is bound by residues 591-593 (CGW), Asp-624, Tyr-626, Arg-676, and 679-680 (NH). Zn(2+) is bound by residues Cys-682, Cys-743, Cys-745, and Cys-750. A Post-SET domain is found at 739–755 (GKKICLCGSVKCRGSFG).

The protein belongs to the class V-like SAM-binding methyltransferase superfamily. Histone-lysine methyltransferase family. Suvar3-9 subfamily.

The protein localises to the nucleus. It localises to the chromosome. The protein resides in the centromere. The catalysed reaction is N(6)-methyl-L-lysyl(9)-[histone H3] + S-adenosyl-L-methionine = N(6),N(6)-dimethyl-L-lysyl(9)-[histone H3] + S-adenosyl-L-homocysteine + H(+). It catalyses the reaction L-lysyl(9)-[histone H3] + S-adenosyl-L-methionine = N(6)-methyl-L-lysyl(9)-[histone H3] + S-adenosyl-L-homocysteine + H(+). In terms of biological role, histone methyltransferase. Methylates 'Lys-9' of histone H3. H3 'Lys-9' methylation represents a specific tag for epigenetic transcriptional repression. This Arabidopsis thaliana (Mouse-ear cress) protein is Histone-lysine N-methyltransferase, H3 lysine-9 specific SUVH8 (SUVH8).